The following is an 84-amino-acid chain: Fulditoxin (84 aa).

An N-terminal signal peptide occupies residues 1–21 (MKTLLLTLVVVTIVCLDLGNS). 4 cysteine pairs are disulfide-bonded: Cys-24–Cys-41, Cys-34–Cys-59, Cys-63–Cys-71, and Cys-72–Cys-77. Residue His-50 participates in Zn(2+) binding.

It belongs to the three-finger toxin family. Short-chain subfamily. As to quaternary structure, homodimer; non-covalently linked. Is able to form a tetramer of dimers in the presence of 2 zinc ions. Expressed by the venom gland.

It is found in the secreted. In terms of biological role, postsynaptic neurotoxin that produces potent, and completely reversible, postsynaptic neuromuscular blockade, as well as broad spectrum inhibition of human muscle and neuronal nicotinic acetylcholine receptors (nAChRs). Inhibition is potent or moderate, depending on the receptor (alpha-1-beta-1-delta-epsilon/CHRNA1-CHRNB1-CHRND-CHRNE (IC(50)=2.56 uM), alpha-4-beta-2/CHRNA4-CHRNB2 (IC(50)=1.8 uM), alpha-7/CHRNA7 (IC(50)=7 uM), and alpha-3-beta-2/CHRNA3-CHRNB2 (IC(50)=12.6 uM)). Acts as a competitive antagonist of ACh. Binds to chicken muscle-type nicotinic acetylcholine receptor (AChR) with high potency compared with the cloned human receptor. Unlike short-chain alpha-3FTxs that only bind to muscle nAChRs, this toxin utilizes dimerization to expand its pharmacological targets to block neuronal nAChRs. This is Fulditoxin from Micrurus fulvius (Eastern coral snake).